Reading from the N-terminus, the 171-residue chain is Ribosome maturation factor RimM (171 aa).

The region spanning 96-169 (EGEFFIADMI…KMIIDPIKGM (74 aa)) is the PRC barrel domain.

The protein belongs to the RimM family. Binds ribosomal protein uS19.

It is found in the cytoplasm. An accessory protein needed during the final step in the assembly of 30S ribosomal subunit, possibly for assembly of the head region. Essential for efficient processing of 16S rRNA. May be needed both before and after RbfA during the maturation of 16S rRNA. It has affinity for free ribosomal 30S subunits but not for 70S ribosomes. The chain is Ribosome maturation factor RimM from Clostridioides difficile (strain 630) (Peptoclostridium difficile).